A 208-amino-acid chain; its full sequence is Outer-membrane lipoprotein carrier protein (208 aa).

The signal sequence occupies residues 1 to 22 (MRKTLTALMLSLPLLTPHMAFA).

This sequence belongs to the LolA family. Monomer.

It is found in the periplasm. In terms of biological role, participates in the translocation of lipoproteins from the inner membrane to the outer membrane. Only forms a complex with a lipoprotein if the residue after the N-terminal Cys is not an aspartate (The Asp acts as a targeting signal to indicate that the lipoprotein should stay in the inner membrane). The protein is Outer-membrane lipoprotein carrier protein of Shewanella woodyi (strain ATCC 51908 / MS32).